The following is a 403-amino-acid chain: Creatinase (403 aa).

H232 is a catalytic residue.

This sequence belongs to the peptidase M24 family. Creatinase subfamily. Homodimer.

It carries out the reaction creatine + H2O = sarcosine + urea. The protein is Creatinase of Flavobacterium sp. (strain U-188).